The chain runs to 510 residues: MAAAGAMPGGLLLTFLLLAVVASGAYNSAGEPPVSRRSFPKGFIFGTASSSYQYEGGAAEGGRGPSIWDTFTHQHPEKIADRSNGDVASDSYHLYKEDVRLMKDMGMDAYRFSISWTRILPNGSLRGGVNKEGIKYYNNLINELLSKGVQPFITLFHWDSPQALEDKYNGFLSPNIINDFKDYAEICFKEFGDRVKNWITFNEPWTFCSNGYATGLFAPGRCSPWEKGNCSVGDSGREPYTACHHQLLAHAETVRLYKAKYQALQKGKIGITLVSHWFVPFSRSKSNNDAAKRAIDFMFGWFMDPLIRGDYPLSMRGLVGNRLPQFTKEQSKLVKGAFDFIGLNYYTANYADNLPPSNGLNNSYTTDSRANLTGVRNGIPIGPQAASPWLYVYPQGFRDLLLYVKENYGNPTVYITENGVDEFNNKTLPLQEALKDDARIEYYHKHLLSLLSAIRDGANVKGYFAWSLLDNFEWSNGYTVRFGINFVDYNDGRKRYPKNSAHWFKKFLLK.

The N-terminal stretch at 1–24 (MAAAGAMPGGLLLTFLLLAVVASG) is a signal peptide. Gln53 is an a beta-D-glucoside binding site. Asn122 carries an N-linked (GlcNAc...) asparagine glycan. Residues His157 and 202-203 (NE) each bind a beta-D-glucoside. The active-site Proton donor is Glu203. 2 disulfide bridges follow: Cys208-Cys243 and Cys222-Cys230. An N-linked (GlcNAc...) asparagine glycan is attached at Asn229. Tyr346 provides a ligand contact to a beta-D-glucoside. Residues Asn361 and Asn371 are each glycosylated (N-linked (GlcNAc...) asparagine). Glu417 contacts a beta-D-glucoside. Glu417 functions as the Nucleophile in the catalytic mechanism. Asn425 carries an N-linked (GlcNAc...) asparagine glycan. Residues Trp466, 473 to 474 (EW), and Phe482 each bind a beta-D-glucoside.

Belongs to the glycosyl hydrolase 1 family.

It is found in the secreted. It carries out the reaction Hydrolysis of terminal, non-reducing beta-D-glucosyl residues with release of beta-D-glucose.. Hydrolyzes p-nitrophenyl beta-D-glucoside, p-nitrophenyl beta-D-galactoside, p-nitrophenyl beta-D-xyloside, p-nitrophenyl beta-D-fucoside, p-nitrophenyl beta-L-arabinoside, cello-oligosaccharides and laminaribiose. This is Beta-glucosidase 12 from Oryza sativa subsp. indica (Rice).